Reading from the N-terminus, the 195-residue chain is 3-isopropylmalate dehydratase small subunit (195 aa).

The protein belongs to the LeuD family. LeuD type 1 subfamily. Heterodimer of LeuC and LeuD.

It carries out the reaction (2R,3S)-3-isopropylmalate = (2S)-2-isopropylmalate. The protein operates within amino-acid biosynthesis; L-leucine biosynthesis; L-leucine from 3-methyl-2-oxobutanoate: step 2/4. Catalyzes the isomerization between 2-isopropylmalate and 3-isopropylmalate, via the formation of 2-isopropylmaleate. The polypeptide is 3-isopropylmalate dehydratase small subunit (Salinispora tropica (strain ATCC BAA-916 / DSM 44818 / JCM 13857 / NBRC 105044 / CNB-440)).